The sequence spans 86 residues: Ferredoxin-like protein YgcO (86 aa).

Residues 45–74 (GNLRIDYRSCLECGTCRLLCDESTLQQWRY) enclose the 4Fe-4S ferredoxin-type domain.

Belongs to the bacterial-type ferredoxin family. FixX subfamily.

In terms of biological role, could be a 3Fe-4S cluster-containing protein. Probably participates in a redox process with YgcN, YgcQ and YgcR. The sequence is that of Ferredoxin-like protein YgcO (ygcO) from Escherichia coli (strain K12).